The chain runs to 158 residues: Transcription elongation factor GreA (158 aa).

Positions Met1–Gln67 form a coiled coil.

This sequence belongs to the GreA/GreB family.

Its function is as follows. Necessary for efficient RNA polymerase transcription elongation past template-encoded arresting sites. The arresting sites in DNA have the property of trapping a certain fraction of elongating RNA polymerases that pass through, resulting in locked ternary complexes. Cleavage of the nascent transcript by cleavage factors such as GreA or GreB allows the resumption of elongation from the new 3'terminus. GreA releases sequences of 2 to 3 nucleotides. The sequence is that of Transcription elongation factor GreA from Trichlorobacter lovleyi (strain ATCC BAA-1151 / DSM 17278 / SZ) (Geobacter lovleyi).